The following is a 312-amino-acid chain: 2-dehydropantoate 2-reductase (312 aa).

NADP(+)-binding positions include 7–12 (GAGAMG), N105, and A131. N105 lines the substrate pocket. Catalysis depends on K187, which acts as the Proton donor. Residues N191, N195, and S260 each contribute to the substrate site. Residue E273 participates in NADP(+) binding.

Belongs to the ketopantoate reductase family.

It localises to the cytoplasm. It carries out the reaction (R)-pantoate + NADP(+) = 2-dehydropantoate + NADPH + H(+). It functions in the pathway cofactor biosynthesis; (R)-pantothenate biosynthesis; (R)-pantoate from 3-methyl-2-oxobutanoate: step 2/2. Functionally, catalyzes the NADPH-dependent reduction of ketopantoate into pantoic acid. The polypeptide is 2-dehydropantoate 2-reductase (Lactococcus lactis subsp. lactis (strain IL1403) (Streptococcus lactis)).